We begin with the raw amino-acid sequence, 885 residues long: DNA mismatch repair protein MutS (885 aa).

626-633 (GPNMGGKS) is an ATP binding site.

Belongs to the DNA mismatch repair MutS family.

In terms of biological role, this protein is involved in the repair of mismatches in DNA. It is possible that it carries out the mismatch recognition step. This protein has a weak ATPase activity. The sequence is that of DNA mismatch repair protein MutS from Burkholderia cenocepacia (strain HI2424).